Consider the following 293-residue polypeptide: Ribosomal protein L11 methyltransferase (293 aa).

S-adenosyl-L-methionine-binding residues include Thr-145, Gly-166, Asp-188, and Asn-230.

Belongs to the methyltransferase superfamily. PrmA family.

It localises to the cytoplasm. It carries out the reaction L-lysyl-[protein] + 3 S-adenosyl-L-methionine = N(6),N(6),N(6)-trimethyl-L-lysyl-[protein] + 3 S-adenosyl-L-homocysteine + 3 H(+). Functionally, methylates ribosomal protein L11. The sequence is that of Ribosomal protein L11 methyltransferase from Shewanella piezotolerans (strain WP3 / JCM 13877).